A 394-amino-acid polypeptide reads, in one-letter code: Acetate kinase (394 aa).

Asn-8 contacts Mg(2+). Lys-15 provides a ligand contact to ATP. A substrate-binding site is contributed by Arg-86. Asp-143 acts as the Proton donor/acceptor in catalysis. Residues 201-205 (HLGNG), 276-278 (DCR), and 324-328 (GIGEN) each bind ATP. Glu-378 contributes to the Mg(2+) binding site.

The protein belongs to the acetokinase family. In terms of assembly, homodimer. The cofactor is Mg(2+). Mn(2+) serves as cofactor.

The protein localises to the cytoplasm. It catalyses the reaction acetate + ATP = acetyl phosphate + ADP. It participates in metabolic intermediate biosynthesis; acetyl-CoA biosynthesis; acetyl-CoA from acetate: step 1/2. Catalyzes the formation of acetyl phosphate from acetate and ATP. Can also catalyze the reverse reaction. The sequence is that of Acetate kinase from Dichelobacter nodosus (strain VCS1703A).